The sequence spans 653 residues: Acetyl-coenzyme A synthetase (653 aa).

Residues 196–199 and Thr315 each bind CoA; that span reads RGGK. ATP is bound by residues 391–393, 415–420, Asp506, and Arg521; these read GEP and DTWWQT. Residue Ser529 participates in CoA binding. ATP is bound at residue Arg532. Residues Val543 and Val548 each contribute to the Mg(2+) site. At Lys618 the chain carries N6-acetyllysine.

This sequence belongs to the ATP-dependent AMP-binding enzyme family. Mg(2+) serves as cofactor. Post-translationally, acetylated. Deacetylation by the SIR2-homolog deacetylase activates the enzyme.

The catalysed reaction is acetate + ATP + CoA = acetyl-CoA + AMP + diphosphate. Catalyzes the conversion of acetate into acetyl-CoA (AcCoA), an essential intermediate at the junction of anabolic and catabolic pathways. AcsA undergoes a two-step reaction. In the first half reaction, AcsA combines acetate with ATP to form acetyl-adenylate (AcAMP) intermediate. In the second half reaction, it can then transfer the acetyl group from AcAMP to the sulfhydryl group of CoA, forming the product AcCoA. In Laribacter hongkongensis (strain HLHK9), this protein is Acetyl-coenzyme A synthetase.